A 542-amino-acid polypeptide reads, in one-letter code: Putative DEAD-box ATP-dependent RNA helicase 43 (542 aa).

The Q motif motif lies at 97-125 (KNFMDMKFPSPLLRMLKDKGIMHPTPIQV). The Helicase ATP-binding domain maps to 128–312 (LPVVLSGRDM…TSALVKPVTV (185 aa)). ATP is bound at residue 141–148 (AFTGSGKT). The DEAD box motif lies at 260-263 (DEAD). The Helicase C-terminal domain maps to 323–483 (DVIQEVEYVK…RIPPVLAELN (161 aa)). A CCHC-type zinc finger spans residues 499–516 (KGCAYCGGLGHRILQCPK).

This sequence belongs to the DEAD box helicase family. DDX41 subfamily.

It catalyses the reaction ATP + H2O = ADP + phosphate + H(+). The polypeptide is Putative DEAD-box ATP-dependent RNA helicase 43 (RH43) (Arabidopsis thaliana (Mouse-ear cress)).